The sequence spans 187 residues: Ribosome-recycling factor (187 aa).

It belongs to the RRF family.

Its subcellular location is the cytoplasm. In terms of biological role, responsible for the release of ribosomes from messenger RNA at the termination of protein biosynthesis. May increase the efficiency of translation by recycling ribosomes from one round of translation to another. The polypeptide is Ribosome-recycling factor (Lactiplantibacillus plantarum (strain ATCC BAA-793 / NCIMB 8826 / WCFS1) (Lactobacillus plantarum)).